The chain runs to 206 residues: Protein GrpE (206 aa).

Over residues 1-15 (MTDSNGQKDNNQDQA) the composition is skewed to polar residues. The interval 1-38 (MTDSNGQKDNNQDQAQPADPVVSKPYIMPDDPEEGTNE) is disordered.

It belongs to the GrpE family. As to quaternary structure, homodimer.

The protein localises to the cytoplasm. Functionally, participates actively in the response to hyperosmotic and heat shock by preventing the aggregation of stress-denatured proteins, in association with DnaK and GrpE. It is the nucleotide exchange factor for DnaK and may function as a thermosensor. Unfolded proteins bind initially to DnaJ; upon interaction with the DnaJ-bound protein, DnaK hydrolyzes its bound ATP, resulting in the formation of a stable complex. GrpE releases ADP from DnaK; ATP binding to DnaK triggers the release of the substrate protein, thus completing the reaction cycle. Several rounds of ATP-dependent interactions between DnaJ, DnaK and GrpE are required for fully efficient folding. This chain is Protein GrpE, found in Rhodopseudomonas palustris (strain BisB5).